A 450-amino-acid polypeptide reads, in one-letter code: Phosphoglucosamine mutase (450 aa).

The active-site Phosphoserine intermediate is the serine 101. Mg(2+) contacts are provided by serine 101, aspartate 241, aspartate 243, and aspartate 245. Serine 101 is modified (phosphoserine).

The protein belongs to the phosphohexose mutase family. Mg(2+) is required as a cofactor. Activated by phosphorylation.

It catalyses the reaction alpha-D-glucosamine 1-phosphate = D-glucosamine 6-phosphate. In terms of biological role, catalyzes the conversion of glucosamine-6-phosphate to glucosamine-1-phosphate. The polypeptide is Phosphoglucosamine mutase (Listeria welshimeri serovar 6b (strain ATCC 35897 / DSM 20650 / CCUG 15529 / CIP 8149 / NCTC 11857 / SLCC 5334 / V8)).